The chain runs to 224 residues: tRNA (guanine-N(7)-)-methyltransferase (224 aa).

Positions 45, 70, 97, and 119 each coordinate S-adenosyl-L-methionine. Asp119 is a catalytic residue. Residues Lys123, Asp155, and 199-202 contribute to the substrate site; that span reads TEYE.

The protein belongs to the class I-like SAM-binding methyltransferase superfamily. TrmB family.

The enzyme catalyses guanosine(46) in tRNA + S-adenosyl-L-methionine = N(7)-methylguanosine(46) in tRNA + S-adenosyl-L-homocysteine. Its pathway is tRNA modification; N(7)-methylguanine-tRNA biosynthesis. Its function is as follows. Catalyzes the formation of N(7)-methylguanine at position 46 (m7G46) in tRNA. In Ureaplasma parvum serovar 3 (strain ATCC 27815 / 27 / NCTC 11736), this protein is tRNA (guanine-N(7)-)-methyltransferase.